A 370-amino-acid chain; its full sequence is Binary larvicide subunit BinA (370 aa).

Residues 1 to 6 constitute a propeptide that is removed on maturation; sequence MRNLDF. The beta-trefoil domain stretch occupies residues 1 to 155; sequence MRNLDFIDSF…LISNKEQIYL (155 aa). A disulfide bond links Cys31 and Cys47. The tract at residues 156–370 is pore-forming domain; that stretch reads TLPSLPENEQ…NTKIITDDQN (215 aa).

Belongs to the toxin_10 family. As to quaternary structure, forms a heterodimer with BinB. Processed by proteases in the mosquito gut, probably at both the N- and C-termini.

The protein localises to the spore. The protein resides in the perispore. Component of a binary toxin active against Culex and some Aedes mosquito larvae. The individual subunits are not toxic. BinAB binds to the gastric caecum and posterior midgut of C.quinquefasciatus larvae; this subunit alone binds the entire larval gut. Binary toxin internalization into host gut cells requires both proteins. Toxic to Aedes atropalpus mosquito larvae; mortality towards both C.quinquefasciatus and A.atropalpus is maximal by 48 hours. A.aegypti is not very susceptible to this toxin. The polypeptide is Binary larvicide subunit BinA (binA) (Lysinibacillus sphaericus (Bacillus sphaericus)).